The chain runs to 500 residues: MGLLSGDTLGPLAVALLIFLLLLDLMHRRSRWAPRYPPGPTPLPVLGNLLQVDFEDPRPSFNQLRRRFGNVFSLQQVWTPVVVLNGLAAVREALVYRSQDTADRPPPAVYEHLGYGPRAEGVILARYGDAWREQRRFSLTTLRNFGLGKKSLEQWVTEEASCLCAAFADQAGRPFSPMDLLNKAVSNVIASLTFGCRFEYNDPRIIKLLDLTEDGLKEEFNLVRKVVEAVPVLLSIPGLAARVFPAQKAFMALIDELIAEQKMTRDPTQPPRHLTDAFLDEVKEAKGNPESSFNDENLRLVVADLFSAGMVTTSTTLAWALLLMILHPDVQRRVQQEIDEVIGQVRRPEMGDQALMPFTVAVVHEVQRFADIVPLGLPHMTSRDIEVQGFHIPKGTTLITNLSSVLKDETVWEKPFRFHPEHFLDAQGRFVKQEAFIPFSAGRRACLGEPLARMELFLFFTSLLQHFSFSVPAGQPRPSEHGVFAFLVTPAPYQLCAVPR.

Cysteine 446 is a binding site for heme.

Belongs to the cytochrome P450 family. The cofactor is heme.

The protein resides in the endoplasmic reticulum membrane. The protein localises to the microsome membrane. The catalysed reaction is an organic molecule + reduced [NADPH--hemoprotein reductase] + O2 = an alcohol + oxidized [NADPH--hemoprotein reductase] + H2O + H(+). In terms of biological role, cytochromes P450 are a group of heme-thiolate monooxygenases. In liver microsomes, this enzyme is involved in an NADPH-dependent electron transport pathway. It oxidizes a variety of structurally unrelated compounds, including steroids, fatty acids, and xenobiotics. The protein is Cytochrome P450 2D14 (CYP2D14) of Bos taurus (Bovine).